Reading from the N-terminus, the 260-residue chain is Lipid II isoglutaminyl synthase (glutamine-hydrolyzing) subunit GatD (260 aa).

The GATase cobBQ-type domain occupies 16-214 (QLNIAHLYGN…FHGPILSRNA (199 aa)). The Nucleophile role is filled by Cys-107. Position 142 (Arg-142) interacts with substrate. His-206 is a catalytic residue.

This sequence belongs to the CobB/CobQ family. GatD subfamily. In terms of assembly, forms a heterodimer with MurT.

The enzyme catalyses beta-D-GlcNAc-(1-&gt;4)-Mur2Ac(oyl-L-Ala-gamma-D-Glu-L-Lys-D-Ala-D-Ala)-di-trans,octa-cis-undecaprenyl diphosphate + L-glutamine + ATP + H2O = beta-D-GlcNAc-(1-&gt;4)-Mur2Ac(oyl-L-Ala-D-isoglutaminyl-L-Lys-D-Ala-D-Ala)-di-trans,octa-cis-undecaprenyl diphosphate + L-glutamate + ADP + phosphate + H(+). It carries out the reaction L-glutamine + H2O = L-glutamate + NH4(+). It participates in cell wall biogenesis; peptidoglycan biosynthesis. The lipid II isoglutaminyl synthase complex catalyzes the formation of alpha-D-isoglutamine in the cell wall lipid II stem peptide. The GatD subunit catalyzes the hydrolysis of glutamine to glutamate and ammonia. The resulting ammonia molecule is channeled to the active site of MurT. The polypeptide is Lipid II isoglutaminyl synthase (glutamine-hydrolyzing) subunit GatD (Streptococcus pneumoniae (strain ATCC BAA-255 / R6)).